The sequence spans 190 residues: Guanylate kinase (190 aa).

One can recognise a Guanylate kinase-like domain in the interval 8-186; the sequence is ARPTVLTGPS…ALAELEKQMN (179 aa). Residue 15 to 22 participates in ATP binding; that stretch reads GPSGVGKG.

The protein belongs to the guanylate kinase family.

The protein localises to the cytoplasm. The enzyme catalyses GMP + ATP = GDP + ADP. It carries out the reaction dZMP + ATP = dZDP + ADP. It participates in purine metabolism. Essential for recycling GMP and indirectly, cGMP. Functionally, (Microbial infection) Catalyzes the phosphorylation of dZMP to dZDP, when the bacterium is infected by a phage that produces the substrate for the synthesis of dZTP (2- amino-2'-deoxyadenosine 5'-triphosphate), which is then used by the phage as a DNA polymerase substrate. The chain is Guanylate kinase from Synechococcus sp. (strain CC9311).